The sequence spans 323 residues: E3 ubiquitin-protein ligase SIRP1 (323 aa).

The RING-type; atypical zinc finger occupies 199–240 (CSVCLDDLEVGSQAKQMPCEHKFHSSCILPWLELHSSCPVCR). Disordered stretches follow at residues 248–280 (TKDL…ESSN) and 296–323 (REAQ…AGHS). Over residues 259–269 (RVEDSHEEVRA) the composition is skewed to basic and acidic residues.

Its subcellular location is the cytoplasm. The enzyme catalyses S-ubiquitinyl-[E2 ubiquitin-conjugating enzyme]-L-cysteine + [acceptor protein]-L-lysine = [E2 ubiquitin-conjugating enzyme]-L-cysteine + N(6)-ubiquitinyl-[acceptor protein]-L-lysine.. The protein operates within protein modification; protein ubiquitination. Possesses E3 ubiqutin-protein ligase activity in vitro. Acts as negative regulator of salinity stress tolerance mediated by the ubiquitin-proteasome degradation pathway. This chain is E3 ubiquitin-protein ligase SIRP1, found in Oryza sativa subsp. japonica (Rice).